Here is a 556-residue protein sequence, read N- to C-terminus: MKRSRTQYAEEPEENDDFNPVYPFDPYDTAHVPFVTPPFTSSNAFQEKPPGVLSLNYKDPIVTENGSLTLKLGNGIKLNSQGQLTTTNTKVLEPLPHTSQGLTLSWSAPLSVKASALTLNTMAPFTTTNESLSLVTAPPITVEASQLGLASCSTSKLRGGGNLGFHLPAPFVVPSSNALTLSASDPLTVNSNSLGLNITSPITLINGSLALATSPPLDTTGSTLNLSVAAPLSVSQNALTVSTGNGLQVSGSQLVTRIGDGLRFDNGVIKAHVAGGNETLRGKIILDVNYPFDATTNLSLRRGSGLIYNESTNWNLTTDISTEKGLTFSGNQIAINAGPCGLTFNNRKLQVKLGAGHTFSSNDNIALNSIATPYDPLTLWTTPDPPPNCTLRQELDAKLTLCLTKNESIVNGIVSLIGVKGDLLHIQPTTTTVGLHLVFDRQGRLVTTTPTALVPQASWGYKQGQSVSSSAVANALGFMPNVSAYPRPNAGEAKSQMLSQTYLQGDTTKPITMKVVFNGNATVDGYSLTFMWTGVSNYLNQQFSTPSCSFSYIAQE.

Positions 1–22 are disordered; the sequence is MKRSRTQYAEEPEENDDFNPVY.

It belongs to the adenoviridae fiber family. Homotrimer. Interacts with host receptor CXCAR. Interacts (via N-terminal tail region) with pentons.

It is found in the virion. The protein resides in the host nucleus. Its function is as follows. Forms spikes that protrude from each vertex of the icosahedral capsid. Interacts with host receptor CXCAR to provide virion initial attachment to target cell. Fiber proteins are shed during virus entry, when virus is still at the cell surface. This is Fiber protein from Human adenovirus A serotype 31 (HAdV-31).